The chain runs to 425 residues: Inner membrane protein YqcE (425 aa).

Residues 1-8 lie on the Cytoplasmic side of the membrane; the sequence is MQHNSYRR. Residues 9 to 29 form a helical membrane-spanning segment; it reads WITLAIISFSGGVSFDLAYLR. Residues 30–48 are Periplasmic-facing; sequence YIYQIPMAKFMGFSNTEIG. The chain crosses the membrane as a helical span at residues 49-69; the sequence is LIMSTFGIAAIILYAPSGVIA. Residues 70–75 are Cytoplasmic-facing; that stretch reads DKFSHR. Transmembrane regions (helical) follow at residues 76-96 and 97-117; these read KMIT…ATYP and PLWV…LMLW. Residues 118 to 138 lie on the Cytoplasmic side of the membrane; sequence SVSIKAASLLGDHSEQGKIMG. A helical transmembrane segment spans residues 139-159; that stretch reads WMEGLRGVGVMSLAVFTMWVF. Topologically, residues 160 to 171 are periplasmic; the sequence is SRFAPDDSTSLK. The chain crosses the membrane as a helical span at residues 172–192; the sequence is TVIIIYSVVYILLGILCWFFV. Over 193–219 the chain is Cytoplasmic; sequence SDNNNLRSANNEEKQSFQLSDILAVLR. A helical transmembrane segment spans residues 220–240; that stretch reads ISTTWYCSMVIFGVFTIYAIL. The Periplasmic segment spans residues 241–259; it reads SYSTNYLTEMYGMSLVAAS. The helical transmembrane segment at 260–280 threads the bilayer; sequence YMGIVINKIFRALCGPLGGII. The Cytoplasmic portion of the chain corresponds to 281-291; it reads TTYSKVKSPTR. Residues 292–312 traverse the membrane as a helical segment; it reads VIQILSVLGLLTLTALLVTNS. N313 is a topological domain (periplasmic). A helical transmembrane segment spans residues 314–334; sequence PQSVAMGIGLILLLGFTCYAS. Residues 335-354 lie on the Cytoplasmic side of the membrane; sequence RGLYWACPGEARTPSYIMGT. The helical transmembrane segment at 355–375 threads the bilayer; that stretch reads TVGICSVIGFLPDVFVYPIIG. The Periplasmic segment spans residues 376–388; that stretch reads HWQDTLPAAEAYR. A helical membrane pass occupies residues 389 to 409; the sequence is NMWLMGMAALGMVIVFTFLLF. The Cytoplasmic segment spans residues 410-425; the sequence is QKIRTADSAPAMASSK.

It to E.coli YihN.

It is found in the cell inner membrane. The sequence is that of Inner membrane protein YqcE (yqcE) from Escherichia coli (strain K12).